The sequence spans 473 residues: Monocarboxylate transporter 4 (473 aa).

The Cytoplasmic portion of the chain corresponds to 1–17 (MGAVVVDDGPSGVKAPD). The chain crosses the membrane as a helical span at residues 18 to 38 (GGWGWAVLFGCFIITGFSYAF). The Extracellular segment spans residues 39 to 61 (PKAVSVFFKELIREFGVGYSDTA). The chain crosses the membrane as a helical span at residues 62–82 (WISSILLAMLYGTGPLCSVCV). Residues 83–91 (NRFGCRPVM) are Cytoplasmic-facing. A helical membrane pass occupies residues 92–112 (LVGGLFASMGMVIASFCTSIV). The Extracellular portion of the chain corresponds to 113–115 (QIY). A helical transmembrane segment spans residues 116–136 (LTAGVITGLGLALNFQPSLIM). At 137 to 149 (LNRYFDKRRPLAN) the chain is on the cytoplasmic side. A helical membrane pass occupies residues 150-170 (GLSAAGSPVFLCALSPLGQIL). Residues 171–179 (QHEYGWRGG) lie on the Extracellular side of the membrane. The chain crosses the membrane as a helical span at residues 180–200 (FLILGGMLLNCCVCGALMRPL). The Cytoplasmic segment spans residues 201-231 (EPPKKSEATKEPAEKKAKKKLLDFSVFKDGG). Residues 232 to 252 (FVIYTLAASIMVLGLFVPPVF) traverse the membrane as a helical segment. The Extracellular portion of the chain corresponds to 253-268 (VVSYAKDLGYQDTKAA). The helical transmembrane segment at 269–289 (FLLTILGFIDIFARPICGMVA) threads the bilayer. The Cytoplasmic segment spans residues 290–297 (GLKWVRPR). Residues 298–318 (CVYLFSFAMIFNGFTDLMGSM) form a helical membrane-spanning segment. Over 319 to 321 (SVD) the chain is Extracellular. A helical membrane pass occupies residues 322–342 (YGGLVVFCIFFGISYGMVGAL). At 343–358 (QFEVLMAIVGTQKFSS) the chain is on the cytoplasmic side. Residues 359 to 379 (AIGLVLLAEAMAVLIGPPSAG) form a helical membrane-spanning segment. Topologically, residues 380–388 (KLLDLTRRY) are extracellular. The chain crosses the membrane as a helical span at residues 389–409 (MFVFIIAGIEVTTSALVLALG). The Cytoplasmic segment spans residues 410 to 473 (NFFCIKKKPA…EVVTNPETCV (64 aa)). The tract at residues 421–447 (PHTKEAAAEREELNKSEDKTPEDAKVD) is disordered. Basolateral sorting signal stretches follow at residues 427–449 (AAER…VDSI) and 449–473 (IEVE…ETCV).

The protein belongs to the major facilitator superfamily. Monocarboxylate porter (TC 2.A.1.13) family. In terms of assembly, interacts with BSG; interaction mediates SLC16A3 targeting to the plasma membrane.

The protein localises to the cell membrane. Its subcellular location is the basolateral cell membrane. The enzyme catalyses (S)-lactate(in) + H(+)(in) = (S)-lactate(out) + H(+)(out). It catalyses the reaction pyruvate(out) + H(+)(out) = pyruvate(in) + H(+)(in). Its function is as follows. Proton-dependent transporter of monocarboxylates such as L-lactate and pyruvate. Plays a predominant role in the L-lactate efflux from highly glycolytic cells. The chain is Monocarboxylate transporter 4 (SLC16A3) from Gallus gallus (Chicken).